The sequence spans 262 residues: MGKKKFIENEDGTTEVQETESEAPKDKKEKKEYRLRTLGANIKTSKKSFKEQFFMNYEDGLKLIKKMRGKGKGGQLVQKVMPRHISLPYHMSGKAAMEEACDWIAQNTVGKYRKEYKGIVVAVGSVDLASAPRVISDQYAFHTDVAINQIVFIPKIGDQYEAKVKYVQEGLMVGVVMDMITIHIKQNDKTSEDQVAIDDKILVKYSGIRIKSSLCHLKGEYVKMIEKAEIKEEEEVEDEADEETDVKEKVKEEEDEDEDMEE.

Disordered regions lie at residues 1–30 (MGKK…KKEK) and 232–262 (EEEE…DMEE). Acidic residues-rich tracts occupy residues 9–21 (NEDG…ETES), 232–245 (EEEE…EETD), and 253–262 (EEDEDEDMEE).

This is an uncharacterized protein from Caenorhabditis elegans.